The sequence spans 53 residues: Mannose/glucose-specific lectin alpha 2 chain (53 aa).

The protein belongs to the leguminous lectin family. In terms of assembly, tetramer of two alpha and two beta chains.

In Lathyrus ochrus (Cyprus-vetch), this protein is Mannose/glucose-specific lectin alpha 2 chain.